The chain runs to 757 residues: Myb-related protein A (757 aa).

HTH myb-type domains follow at residues 30 to 81, 82 to 137, and 138 to 188; these read KKIC…QKVL, NPEL…NPEV, and KKSS…RRKV. 3 consecutive DNA-binding regions (H-T-H motif) follow at residues 58-81, 110-133, and 161-184; these read WAFI…QKVL, WSLI…HNHL, and WAEI…NSTM. The segment at 187 to 209 is disordered; it reads KVEQEGYLQDGTKSSSERTGSST. Over residues 197–209 the composition is skewed to polar residues; that stretch reads GTKSSSERTGSST. Residues 235–300 are transcriptional activation domain; it reads IPVYQYASPE…RLSSQAGSLP (66 aa). The interval 303–558 is negative regulatory domain; that stretch reads SGSFVMEDCV…IRRSLLGSTP (256 aa).

Component of the DREAM complex. Expressed ubiquitously.

The protein localises to the nucleus. Strong transcriptional activator; DNA-binding protein that specifically recognize the sequence 5'-YAAC[GT]G-3'. Could have a role in the proliferation and/or differentiation of neurogenic, spermatogenic and B-lymphoid cells. This is Myb-related protein A (MYBL1) from Gallus gallus (Chicken).